The primary structure comprises 627 residues: Chaperone protein DnaK (627 aa).

T197 is modified (phosphothreonine; by autocatalysis). Residues 602 to 611 (ENQHSEANTV) are compositionally biased toward polar residues. The disordered stretch occupies residues 602 to 627 (ENQHSEANTVNDEKVVDADFQDVDKK). The span at 612–627 (NDEKVVDADFQDVDKK) shows a compositional bias: basic and acidic residues.

This sequence belongs to the heat shock protein 70 family.

Functionally, acts as a chaperone. The polypeptide is Chaperone protein DnaK (Rickettsia felis (strain ATCC VR-1525 / URRWXCal2) (Rickettsia azadi)).